Consider the following 365-residue polypeptide: Chorismate synthase (365 aa).

Residues Arg48 and Arg54 each coordinate NADP(+). FMN-binding positions include 125-127 (RSS), 238-239 (NA), Gly278, 293-297 (KPTSS), and Arg319.

It belongs to the chorismate synthase family. Homotetramer. It depends on FMNH2 as a cofactor.

It carries out the reaction 5-O-(1-carboxyvinyl)-3-phosphoshikimate = chorismate + phosphate. It functions in the pathway metabolic intermediate biosynthesis; chorismate biosynthesis; chorismate from D-erythrose 4-phosphate and phosphoenolpyruvate: step 7/7. In terms of biological role, catalyzes the anti-1,4-elimination of the C-3 phosphate and the C-6 proR hydrogen from 5-enolpyruvylshikimate-3-phosphate (EPSP) to yield chorismate, which is the branch point compound that serves as the starting substrate for the three terminal pathways of aromatic amino acid biosynthesis. This reaction introduces a second double bond into the aromatic ring system. The polypeptide is Chorismate synthase (Vesicomyosocius okutanii subsp. Calyptogena okutanii (strain HA)).